The chain runs to 280 residues: NLP effector protein Pc553546 (280 aa).

Positions Met-1–Gly-19 are cleaved as a signal peptide. A Hepta-peptide GHRHDWE motif motif is present at residues Ala-123 to Ala-129. 2 N-linked (GlcNAc...) asparagine glycosylation sites follow: Asn-142 and Asn-209.

It belongs to the Necrosis inducing protein (NPP1) family.

The protein resides in the secreted. Secreted effector that contributes strongly to virulence during infection by P.capsici. This is NLP effector protein Pc553546 from Phytophthora capsici.